A 521-amino-acid polypeptide reads, in one-letter code: Bifunctional purine biosynthesis protein PurH (521 aa).

An MGS-like domain is found at 1 to 145 (MIKQALISVS…KNHRDVTVVV (145 aa)).

The protein belongs to the PurH family.

It carries out the reaction (6R)-10-formyltetrahydrofolate + 5-amino-1-(5-phospho-beta-D-ribosyl)imidazole-4-carboxamide = 5-formamido-1-(5-phospho-D-ribosyl)imidazole-4-carboxamide + (6S)-5,6,7,8-tetrahydrofolate. The enzyme catalyses IMP + H2O = 5-formamido-1-(5-phospho-D-ribosyl)imidazole-4-carboxamide. The protein operates within purine metabolism; IMP biosynthesis via de novo pathway; 5-formamido-1-(5-phospho-D-ribosyl)imidazole-4-carboxamide from 5-amino-1-(5-phospho-D-ribosyl)imidazole-4-carboxamide (10-formyl THF route): step 1/1. It participates in purine metabolism; IMP biosynthesis via de novo pathway; IMP from 5-formamido-1-(5-phospho-D-ribosyl)imidazole-4-carboxamide: step 1/1. This chain is Bifunctional purine biosynthesis protein PurH, found in Burkholderia cenocepacia (strain ATCC BAA-245 / DSM 16553 / LMG 16656 / NCTC 13227 / J2315 / CF5610) (Burkholderia cepacia (strain J2315)).